Here is a 554-residue protein sequence, read N- to C-terminus: MTSIKVVCRIRPTNQLEQDLGGNNVIYPLNDSTVHIETSDYSGNFVFDRVFHPSSTQNDIFSYSIESTVDDLFLGYNGTVLAYGQTGSGKTYTMMGIENNFEKEGMTPRMLRRIFDKIRDSPSTTEYEVKVSYMEIYMEKIHDLLSEKNDRLTVHEDKLQGVYVQGLKTIYVSSETEALDILNKGMGSRAVASTSMNAQSSRSHSIFVLEVVQTDTESGETRRGRLFLVDLAGSESVGKSGAVGQTLEEAKKINRSLSTLGMVINSLTDSKLSHVPYRDSKLTRILKESLGGNSRTTLIINCSPDSYNATETLSTLRFGHRAKSIKNKAVVNSELSVDEMKRQLYIYKDALSRCVCGARINNNLDYNNCHSNVWSGEHSLTLSNLAEKSNLKEAEIIQGNRTIQESNNDRDESTVASIHRHNFDSDSINRLYAEAQLELKQRDGVLSSTKQQLSDLMTALGDAQERYVELVKNHRVNSNLTANNSLNDKPGFTIEQKDKNFSINNERNNFLQKLSTLDSSLAALVNVQRKLIKALISKERPQNGTVIKKIQGGT.

Residues 3–325 (SIKVVCRIRP…LRFGHRAKSI (323 aa)) form the Kinesin motor domain. ATP contacts are provided by residues 84-91 (GQTGSGKT) and 233-240 (GSESVGKS). Positions 446-473 (LSSTKQQLSDLMTALGDAQERYVELVKN) form a coiled coil.

It belongs to the TRAFAC class myosin-kinesin ATPase superfamily. Kinesin family.

It is found in the cytoplasm. The protein resides in the cytoskeleton. Functionally, cytoplasmic motor that could play a role in Golgi membrane recycling. The protein is Kinesin-like protein 3 (klp3) of Schizosaccharomyces pombe (strain 972 / ATCC 24843) (Fission yeast).